A 235-amino-acid polypeptide reads, in one-letter code: MHTSALVLFSGGQDSTTCLAQALSKYERVETVAFDYGQRHKVELDARLNVLREIKSRFPHWAPKLGEDHLLDLAVLGQVSDTSLTRDVAFKMENSGLPNTFVPGRNLLFLTLAAALAYRRDLQVLVTGVCETDFSGYPDCRDDTIKAMQLALSLGMDKRFLIETPLMWIDKADTWRLAHALGGQALVDLIIEHTHTCYLGDRTHRQAWGYGCGACPACELRARGYERYAAALSKP.

9–19 (FSGGQDSTTCL) lines the ATP pocket. Residues Cys197, Cys212, Cys215, and Cys218 each coordinate Zn(2+).

The protein belongs to the QueC family. It depends on Zn(2+) as a cofactor.

It catalyses the reaction 7-carboxy-7-deazaguanine + NH4(+) + ATP = 7-cyano-7-deazaguanine + ADP + phosphate + H2O + H(+). The protein operates within purine metabolism; 7-cyano-7-deazaguanine biosynthesis. Its function is as follows. Catalyzes the ATP-dependent conversion of 7-carboxy-7-deazaguanine (CDG) to 7-cyano-7-deazaguanine (preQ(0)). The sequence is that of 7-cyano-7-deazaguanine synthase from Polaromonas sp. (strain JS666 / ATCC BAA-500).